The following is a 754-amino-acid chain: tRNA 5-methylaminomethyl-2-thiouridine biosynthesis bifunctional protein MnmC (754 aa).

The tract at residues 1–320 (MPSCYEHSAQ…RRQAVNNSDS (320 aa)) is tRNA (mnm(5)s(2)U34)-methyltransferase. Positions 324–754 (IGGGIAGACL…RKLLKGKALC (431 aa)) are FAD-dependent cmnm(5)s(2)U34 oxidoreductase.

In the N-terminal section; belongs to the methyltransferase superfamily. tRNA (mnm(5)s(2)U34)-methyltransferase family. It in the C-terminal section; belongs to the DAO family. The cofactor is FAD.

It is found in the cytoplasm. The catalysed reaction is 5-aminomethyl-2-thiouridine(34) in tRNA + S-adenosyl-L-methionine = 5-methylaminomethyl-2-thiouridine(34) in tRNA + S-adenosyl-L-homocysteine + H(+). Catalyzes the last two steps in the biosynthesis of 5-methylaminomethyl-2-thiouridine (mnm(5)s(2)U) at the wobble position (U34) in tRNA. Catalyzes the FAD-dependent demodification of cmnm(5)s(2)U34 to nm(5)s(2)U34, followed by the transfer of a methyl group from S-adenosyl-L-methionine to nm(5)s(2)U34, to form mnm(5)s(2)U34. The protein is tRNA 5-methylaminomethyl-2-thiouridine biosynthesis bifunctional protein MnmC of Shewanella denitrificans (strain OS217 / ATCC BAA-1090 / DSM 15013).